The primary structure comprises 89 residues: Small ribosomal subunit protein bS20 (89 aa).

The protein belongs to the bacterial ribosomal protein bS20 family.

Functionally, binds directly to 16S ribosomal RNA. This Sulfurovum sp. (strain NBC37-1) protein is Small ribosomal subunit protein bS20.